The sequence spans 355 residues: Guanine nucleotide-binding protein G(i) subunit alpha-2 (355 aa).

Gly2 carries the N-myristoyl glycine lipid modification. Residue Cys3 is the site of S-palmitoyl cysteine attachment. A G-alpha domain is found at 32 to 355; sequence REVKLLLLGA…KNNLKDCGLF (324 aa). Residues 35–48 are G1 motif; it reads KLLLLGAGESGKST. Residues 40–47, 176–182, 201–205, 270–273, and Ala327 contribute to the GTP site; these read GAGESGKS, LRTRVKT, DVGGQ, and NKKD. Ser47 and Thr182 together coordinate Mg(2+). The segment at 174 to 182 is G2 motif; that stretch reads DVLRTRVKT. The G3 motif stretch occupies residues 197–206; it reads FKMFDVGGQR. Residues 266–273 form a G4 motif region; the sequence is ILFLNKKD. Residues 325–330 form a G5 motif region; that stretch reads TCATDT.

This sequence belongs to the G-alpha family. G(i/o/t/z) subfamily. As to quaternary structure, g proteins are composed of 3 units; alpha, beta and gamma. The alpha chain contains the guanine nucleotide binding site. In this context, interacts with GNB2. Interacts with UNC5B. Interacts with GPSM1. Interacts with RGS12 and RGS14. Interacts (inactive GDP-bound form) with NUCB1 (via GBA motif); the interaction leads to activation of GNAI3. Interacts (inactive GDP-bound form) with CCDC88C/DAPLE (via GBA motif). Interacts (inactive GDP-bound form) with CCDC8A/GIV (via GBA motif). Interacts with CXCR1 and CXCR2.

The protein localises to the cytoplasm. The protein resides in the cytoskeleton. Its subcellular location is the microtubule organizing center. It is found in the centrosome. It localises to the cell membrane. The protein localises to the membrane. Functionally, guanine nucleotide-binding proteins (G proteins) are involved as modulators or transducers in various transmembrane signaling systems. The G(i) proteins are involved in hormonal regulation of adenylate cyclase: they inhibit the cyclase in response to beta-adrenergic stimuli. May play a role in cell division. The protein is Guanine nucleotide-binding protein G(i) subunit alpha-2 (Gnai2) of Mus musculus (Mouse).